The sequence spans 622 residues: Type 2 DNA topoisomerase 6 subunit B (622 aa).

Residues Asn-48, Asp-80, 101–102, 111–118, and Lys-435 each bind ATP; these read SR and GQQGIGIS.

Belongs to the TOP6B family. As to quaternary structure, homodimer. Heterotetramer of two Top6A and two Top6B chains.

The enzyme catalyses ATP-dependent breakage, passage and rejoining of double-stranded DNA.. In terms of biological role, relaxes both positive and negative superturns and exhibits a strong decatenase activity. This is Type 2 DNA topoisomerase 6 subunit B from Methanococcoides burtonii (strain DSM 6242 / NBRC 107633 / OCM 468 / ACE-M).